A 523-amino-acid chain; its full sequence is Calcium-dependent protein kinase 28 (523 aa).

Residue G2 is the site of N-myristoyl glycine attachment. C4 carries S-palmitoyl cysteine lipidation. The segment at 15–43 is disordered; the sequence is SSRRSSQTKSKAAPTPIDTKASTKRRTGS. The 261-residue stretch at 62 to 322 folds into the Protein kinase domain; the sequence is YTIGKLLGHG…AAQALSHAWV (261 aa). ATP-binding positions include 68–76 and K91; that span reads LGHGQFGYT. The active-site Proton acceptor is the D188. S228 and S318 each carry phosphoserine. The segment at 328-358 is autoinhibitory domain; sequence ATDIPVDISVLNNLRQFVRYSRLKQFALRAL. EF-hand domains follow at residues 365 to 400, 402 to 437, 444 to 479, and 482 to 509; these read AEISDLRDQFDAIDVDKNGVISLEEMRQALAKDLPW, LKDSRVAEILEAIDSNTDGLVDFTEFVAAALHVHQL, KWQLRSRAAFEKFDLDKDGYITPEELRMHTGLRGSI, and LLDEADIDRDGKISLHEFRRLLRTASIS. Residues D378, D380, N382, E389, D415, N417, D419, E426, D457, D459, D461, Y463, E468, D487, D489, D491, and K493 each contribute to the Ca(2+) site. A Phosphoserine modification is found at S495. E498 is a binding site for Ca(2+). At S515 the chain carries Phosphoserine.

It belongs to the protein kinase superfamily. Ser/Thr protein kinase family. CDPK subfamily. Interacts with BIK1. As to expression, expressed in vascular and meristematic tissues throughout plant development.

The protein localises to the cell membrane. The enzyme catalyses L-seryl-[protein] + ATP = O-phospho-L-seryl-[protein] + ADP + H(+). It catalyses the reaction L-threonyl-[protein] + ATP = O-phospho-L-threonyl-[protein] + ADP + H(+). Its activity is regulated as follows. Activated by calcium. Autophosphorylation plays an important role in the regulation of the kinase activity. Functionally, may play a role in signal transduction pathways that involve calcium as a second messenger. Acts as a developmentally controlled regulator for coordinated stem elongation and vascular development. Acts as a key component which contributes to the developmental switch that establishes the transition from vegetative to reproductive growth. Involved in pathogen-associated molecular pattern (PAMP)-triggered immunity (PTI) signaling. Interacts with and phosphorylates the kinase BIK1, a central rate-limiting kinase in PTI signaling. Facilitates BIK1 turnover and negatively regulates BIK1-mediated immune responses triggered by several PAMPs. Its kinase activity is necessary and sufficient for its function in PTI signaling. This chain is Calcium-dependent protein kinase 28, found in Arabidopsis thaliana (Mouse-ear cress).